The primary structure comprises 467 residues: Cysteine--tRNA ligase (467 aa).

Cys29 is a Zn(2+) binding site. Residues 31–41 (PTVYDDSHLGH) carry the 'HIGH' region motif. The interval 155-174 (KLSGRGEDLEQVSRIESSEE) is disordered. A compositionally biased stretch (basic and acidic residues) spans 158–174 (GRGEDLEQVSRIESSEE). Residues Cys210, His239, and Glu243 each contribute to the Zn(2+) site. A 'KMSKS' region motif is present at residues 271–275 (KMSKS). Lys274 is a binding site for ATP.

This sequence belongs to the class-I aminoacyl-tRNA synthetase family. Monomer. Zn(2+) serves as cofactor.

The protein resides in the cytoplasm. It catalyses the reaction tRNA(Cys) + L-cysteine + ATP = L-cysteinyl-tRNA(Cys) + AMP + diphosphate. The sequence is that of Cysteine--tRNA ligase from Wolinella succinogenes (strain ATCC 29543 / DSM 1740 / CCUG 13145 / JCM 31913 / LMG 7466 / NCTC 11488 / FDC 602W) (Vibrio succinogenes).